A 391-amino-acid polypeptide reads, in one-letter code: Tryptophan synthase beta chain (391 aa).

Lys84 is modified (N6-(pyridoxal phosphate)lysine).

It belongs to the TrpB family. Tetramer of two alpha and two beta chains. Requires pyridoxal 5'-phosphate as cofactor.

The enzyme catalyses (1S,2R)-1-C-(indol-3-yl)glycerol 3-phosphate + L-serine = D-glyceraldehyde 3-phosphate + L-tryptophan + H2O. The protein operates within amino-acid biosynthesis; L-tryptophan biosynthesis; L-tryptophan from chorismate: step 5/5. Its function is as follows. The beta subunit is responsible for the synthesis of L-tryptophan from indole and L-serine. The sequence is that of Tryptophan synthase beta chain from Thermoanaerobacter sp. (strain X514).